Here is a 66-residue protein sequence, read N- to C-terminus: Neurotoxin-like protein STR1 (66 aa).

Positions 2 to 65 (RDGYIVHDGT…VWGEDGFMCW (64 aa)) constitute an LCN-type CS-alpha/beta domain. Intrachain disulfides connect C13-C64, C17-C40, C26-C45, and C30-C47.

This sequence belongs to the long (4 C-C) scorpion toxin superfamily. Sodium channel inhibitor family. Beta subfamily. In terms of tissue distribution, expressed by the venom gland.

It localises to the secreted. This protein is not toxic. The sequence is that of Neurotoxin-like protein STR1 from Androctonus australis (Sahara scorpion).